The chain runs to 69 residues: Pleurain-A2 (69 aa).

Residues 1–22 form the signal peptide; it reads MFTLKKTLLLLYFLGTISISLC. The propeptide occupies 23–43; sequence KQERDADEDDGRKMTEEEVKR. A disulfide bridge links cysteine 63 with cysteine 69.

As to expression, expressed by the skin glands.

It is found in the secreted. In terms of biological role, antimicrobial peptide. Has activity against the Gram-positive bacterium S.aureus ATCC2592 (MIC=15 ug/ml), the Gram-negative bacteria E.coli ATCC25922 (MIC=60 ug/ml), B.dysenteriae (MIC=60 ug/ml), H.pylori NTCT11637 (MIC=30 ug/ml), and the fungus C.albicans ATCC2002 (MIC=30 ug/ml). Has little hemolytic activity on rabbit red blood cells. In Nidirana pleuraden (Yunnan pond frog), this protein is Pleurain-A2.